We begin with the raw amino-acid sequence, 470 residues long: 3-isopropylmalate dehydratase large subunit (470 aa).

Cys351, Cys411, and Cys414 together coordinate [4Fe-4S] cluster.

Belongs to the aconitase/IPM isomerase family. LeuC type 1 subfamily. In terms of assembly, heterodimer of LeuC and LeuD. Requires [4Fe-4S] cluster as cofactor.

It carries out the reaction (2R,3S)-3-isopropylmalate = (2S)-2-isopropylmalate. Its pathway is amino-acid biosynthesis; L-leucine biosynthesis; L-leucine from 3-methyl-2-oxobutanoate: step 2/4. Catalyzes the isomerization between 2-isopropylmalate and 3-isopropylmalate, via the formation of 2-isopropylmaleate. In Rhodopseudomonas palustris (strain BisB5), this protein is 3-isopropylmalate dehydratase large subunit.